Here is a 259-residue protein sequence, read N- to C-terminus: 5'-nucleotidase SurE (259 aa).

Residues Asp-13, Asp-14, Ser-44, and Asn-101 each contribute to the a divalent metal cation site.

This sequence belongs to the SurE nucleotidase family. A divalent metal cation serves as cofactor.

Its subcellular location is the cytoplasm. The enzyme catalyses a ribonucleoside 5'-phosphate + H2O = a ribonucleoside + phosphate. In terms of biological role, nucleotidase that shows phosphatase activity on nucleoside 5'-monophosphates. The polypeptide is 5'-nucleotidase SurE (Flavobacterium johnsoniae (strain ATCC 17061 / DSM 2064 / JCM 8514 / BCRC 14874 / CCUG 350202 / NBRC 14942 / NCIMB 11054 / UW101) (Cytophaga johnsonae)).